We begin with the raw amino-acid sequence, 99 residues long: Regulatory protein FanB (99 aa).

Trans-acting protein involved in the regulation of the biogenesis of K99 fimbriae (FanC). The chain is Regulatory protein FanB (fanB) from Escherichia coli.